Reading from the N-terminus, the 135-residue chain is S-protein homolog 20 (135 aa).

The N-terminal stretch at 1–26 is a signal peptide; sequence MNGSSAFHIILSVTFMVFLFGGLCEA. N-linked (GlcNAc...) asparagine glycosylation occurs at Asn88.

This sequence belongs to the plant self-incompatibility (S1) protein family.

The protein resides in the secreted. The polypeptide is S-protein homolog 20 (Arabidopsis thaliana (Mouse-ear cress)).